The following is a 339-amino-acid chain: 3-isopropylmalate dehydrogenase (339 aa).

Substrate contacts are provided by Arg-88, Arg-98, Arg-122, and Asp-212. Mg(2+) is bound by residues Asp-212, Asp-236, and Asp-240. An NAD(+)-binding site is contributed by 272 to 284 (GSAPDIAGQGIAD).

Belongs to the isocitrate and isopropylmalate dehydrogenases family. LeuB type 2 subfamily. As to quaternary structure, homodimer. It depends on Mg(2+) as a cofactor. Mn(2+) is required as a cofactor.

It localises to the cytoplasm. It carries out the reaction (2R,3S)-3-isopropylmalate + NAD(+) = 4-methyl-2-oxopentanoate + CO2 + NADH. The protein operates within amino-acid biosynthesis; L-leucine biosynthesis; L-leucine from 3-methyl-2-oxobutanoate: step 3/4. In terms of biological role, catalyzes the oxidation of 3-carboxy-2-hydroxy-4-methylpentanoate (3-isopropylmalate) to 3-carboxy-4-methyl-2-oxopentanoate. The product decarboxylates to 4-methyl-2 oxopentanoate. This Corynebacterium urealyticum (strain ATCC 43042 / DSM 7109) protein is 3-isopropylmalate dehydrogenase.